Reading from the N-terminus, the 89-residue chain is Signal recognition particle 19 kDa protein (89 aa).

This sequence belongs to the SRP19 family. Part of the signal recognition particle protein translocation system, which is composed of SRP and FtsY. Archaeal SRP consists of a 7S RNA molecule of 300 nucleotides and two protein subunits: SRP54 and SRP19.

It is found in the cytoplasm. Involved in targeting and insertion of nascent membrane proteins into the cytoplasmic membrane. Binds directly to 7S RNA and mediates binding of the 54 kDa subunit of the SRP. This chain is Signal recognition particle 19 kDa protein, found in Methanococcus maripaludis (strain C5 / ATCC BAA-1333).